Reading from the N-terminus, the 298-residue chain is N-acetylmuramic acid 6-phosphate etherase (298 aa).

Residues 55–218 (IHAQVSGGGR…STGLMIKSGK (164 aa)) form the SIS domain. The active-site Proton donor is the glutamate 83. Residue glutamate 114 is part of the active site.

It belongs to the GCKR-like family. MurNAc-6-P etherase subfamily. In terms of assembly, homodimer.

The catalysed reaction is N-acetyl-D-muramate 6-phosphate + H2O = N-acetyl-D-glucosamine 6-phosphate + (R)-lactate. It functions in the pathway amino-sugar metabolism; 1,6-anhydro-N-acetylmuramate degradation. It participates in amino-sugar metabolism; N-acetylmuramate degradation. The protein operates within cell wall biogenesis; peptidoglycan recycling. Its function is as follows. Specifically catalyzes the cleavage of the D-lactyl ether substituent of MurNAc 6-phosphate, producing GlcNAc 6-phosphate and D-lactate. Together with AnmK, is also required for the utilization of anhydro-N-acetylmuramic acid (anhMurNAc) either imported from the medium or derived from its own cell wall murein, and thus plays a role in cell wall recycling. The protein is N-acetylmuramic acid 6-phosphate etherase of Shigella dysenteriae serotype 1 (strain Sd197).